Consider the following 492-residue polypeptide: Aspartyl/glutamyl-tRNA(Asn/Gln) amidotransferase subunit B (492 aa).

The protein belongs to the GatB/GatE family. GatB subfamily. As to quaternary structure, heterotrimer of A, B and C subunits.

It catalyses the reaction L-glutamyl-tRNA(Gln) + L-glutamine + ATP + H2O = L-glutaminyl-tRNA(Gln) + L-glutamate + ADP + phosphate + H(+). The catalysed reaction is L-aspartyl-tRNA(Asn) + L-glutamine + ATP + H2O = L-asparaginyl-tRNA(Asn) + L-glutamate + ADP + phosphate + 2 H(+). Allows the formation of correctly charged Asn-tRNA(Asn) or Gln-tRNA(Gln) through the transamidation of misacylated Asp-tRNA(Asn) or Glu-tRNA(Gln) in organisms which lack either or both of asparaginyl-tRNA or glutaminyl-tRNA synthetases. The reaction takes place in the presence of glutamine and ATP through an activated phospho-Asp-tRNA(Asn) or phospho-Glu-tRNA(Gln). The chain is Aspartyl/glutamyl-tRNA(Asn/Gln) amidotransferase subunit B from Bradyrhizobium diazoefficiens (strain JCM 10833 / BCRC 13528 / IAM 13628 / NBRC 14792 / USDA 110).